The sequence spans 243 residues: Pyridoxine 5'-phosphate synthase (243 aa).

N9 lines the 3-amino-2-oxopropyl phosphate pocket. Position 11–12 (11–12 (DH)) interacts with 1-deoxy-D-xylulose 5-phosphate. R20 lines the 3-amino-2-oxopropyl phosphate pocket. The active-site Proton acceptor is the H45. Residues R47 and H52 each contribute to the 1-deoxy-D-xylulose 5-phosphate site. The active-site Proton acceptor is the E72. 1-deoxy-D-xylulose 5-phosphate is bound at residue T102. H193 acts as the Proton donor in catalysis. Residues G194 and 215-216 (GH) contribute to the 3-amino-2-oxopropyl phosphate site.

It belongs to the PNP synthase family. Homooctamer; tetramer of dimers.

Its subcellular location is the cytoplasm. The catalysed reaction is 3-amino-2-oxopropyl phosphate + 1-deoxy-D-xylulose 5-phosphate = pyridoxine 5'-phosphate + phosphate + 2 H2O + H(+). It functions in the pathway cofactor biosynthesis; pyridoxine 5'-phosphate biosynthesis; pyridoxine 5'-phosphate from D-erythrose 4-phosphate: step 5/5. In terms of biological role, catalyzes the complicated ring closure reaction between the two acyclic compounds 1-deoxy-D-xylulose-5-phosphate (DXP) and 3-amino-2-oxopropyl phosphate (1-amino-acetone-3-phosphate or AAP) to form pyridoxine 5'-phosphate (PNP) and inorganic phosphate. The protein is Pyridoxine 5'-phosphate synthase of Photorhabdus laumondii subsp. laumondii (strain DSM 15139 / CIP 105565 / TT01) (Photorhabdus luminescens subsp. laumondii).